We begin with the raw amino-acid sequence, 424 residues long: UPF0597 protein SO_1403 (424 aa).

This sequence belongs to the UPF0597 family.

This chain is UPF0597 protein SO_1403, found in Shewanella oneidensis (strain ATCC 700550 / JCM 31522 / CIP 106686 / LMG 19005 / NCIMB 14063 / MR-1).